A 515-amino-acid polypeptide reads, in one-letter code: Lysosomal acid glucosylceramidase (515 aa).

The signal sequence occupies residues 1–19 (MAARLIGFFLFQAVSWAYG). Cystine bridges form between cysteine 23–cysteine 35 and cysteine 37–cysteine 42. Asparagine 38 and asparagine 78 each carry an N-linked (GlcNAc...) asparagine glycan. The N-linked (GlcNAc...) (high mannose) asparagine glycan is linked to asparagine 165. Glutamate 254 functions as the Proton donor in the catalytic mechanism. Asparagine 289 is a glycosylation site (N-linked (GlcNAc...) asparagine). Catalysis depends on glutamate 358, which acts as the Nucleophile. Asparagine 480 is a glycosylation site (N-linked (GlcNAc...) asparagine).

It belongs to the glycosyl hydrolase 30 family. In terms of assembly, interacts with saposin-C. Interacts with SCARB2. Interacts with TCP1. Interacts with GRN; this interaction prevents aggregation of GBA1-SCARB2 complex via interaction with HSPA1A upon stress.

It is found in the lysosome membrane. The catalysed reaction is a beta-D-glucosyl-(1&lt;-&gt;1')-N-acylsphing-4-enine + H2O = an N-acylsphing-4-enine + D-glucose. It carries out the reaction a beta-D-galactosyl-(1&lt;-&gt;1')-N-acylsphing-4-enine + H2O = an N-acylsphing-4-enine + D-galactose. The enzyme catalyses cholesteryl 3-beta-D-glucoside + H2O = cholesterol + D-glucose. It catalyses the reaction a beta-D-glucosyl-(1&lt;-&gt;1')-N-acylsphing-4-enine + cholesterol = cholesteryl 3-beta-D-glucoside + an N-acylsphing-4-enine. The catalysed reaction is beta-D-glucosyl-(1&lt;-&gt;1')-N-hexadecanoylsphing-4-enine + cholesterol = cholesteryl 3-beta-D-glucoside + N-hexadecanoylsphing-4-enine. It carries out the reaction beta-D-glucosyl-N-(9Z-octadecenoyl)-sphing-4E-enine + cholesterol = N-(9Z-octadecenoyl)-sphing-4-enine + cholesteryl 3-beta-D-glucoside. The enzyme catalyses beta-D-glucosyl-N-octanoylsphing-4E-enine + cholesterol = N-octanoylsphing-4-enine + cholesteryl 3-beta-D-glucoside. It catalyses the reaction beta-D-glucosyl-N-dodecanoylsphing-4-enine + cholesterol = N-dodecanoylsphing-4-enine + cholesteryl 3-beta-D-glucoside. The catalysed reaction is beta-D-glucosyl-(1&lt;-&gt;1)-N-octadecanoylsphing-4-enine + cholesterol = N-octadecanoylsphing-4-enine + cholesteryl 3-beta-D-glucoside. It carries out the reaction beta-D-glucosyl-(1&lt;-&gt;1')-N-(15Z-tetracosenoyl)-sphing-4-enine + cholesterol = N-(15Z-tetracosenoyl)-sphing-4-enine + cholesteryl 3-beta-D-glucoside. The enzyme catalyses a beta-D-galactosyl-(1&lt;-&gt;1')-N-acylsphing-4-enine + cholesterol = cholesteryl 3-beta-D-galactoside + an N-acylsphing-4-enine. It catalyses the reaction 1-(beta-D-galactosyl)-N-dodecanoylsphing-4-enine + cholesterol = cholesteryl 3-beta-D-galactoside + N-dodecanoylsphing-4-enine. The catalysed reaction is a beta-D-xylosyl-(1&lt;-&gt;1')-N-acylsphing-4-enine + cholesterol = cholesteryl 3-beta-D-xyloside + an N-acylsphing-4-enine. It carries out the reaction beta-D-xylosyl-(1&lt;-&gt;1')-N-(9Z-octadecenoyl)-sphing-4-enine + cholesterol = cholesteryl 3-beta-D-xyloside + N-(9Z-octadecenoyl)-sphing-4-enine. The protein operates within steroid metabolism; cholesterol metabolism. It participates in sphingolipid metabolism. Its activity is regulated as follows. Inhibited by conduritol B epoxide/CBE. In terms of biological role, glucosylceramidase that catalyzes, within the lysosomal compartment, the hydrolysis of glucosylceramides/GlcCers (such as beta-D-glucosyl-(1&lt;-&gt;1')-N-acylsphing-4-enine) into free ceramides (such as N-acylsphing-4-enine) and glucose. Plays a central role in the degradation of complex lipids and the turnover of cellular membranes. Through the production of ceramides, participates in the PKC-activated salvage pathway of ceramide formation. Catalyzes the glucosylation of cholesterol, through a transglucosylation reaction where glucose is transferred from GlcCer to cholesterol. GlcCer containing mono-unsaturated fatty acids (such as beta-D-glucosyl-N-(9Z-octadecenoyl)-sphing-4-enine) are preferred as glucose donors for cholesterol glucosylation when compared with GlcCer containing same chain length of saturated fatty acids (such as beta-D-glucosyl-N-octadecanoyl-sphing-4-enine). Under specific conditions, may alternatively catalyze the reverse reaction, transferring glucose from cholesteryl 3-beta-D-glucoside to ceramide. Can also hydrolyze cholesteryl 3-beta-D-glucoside producing glucose and cholesterol. Catalyzes the hydrolysis of galactosylceramides/GalCers (such as beta-D-galactosyl-(1&lt;-&gt;1')-N-acylsphing-4-enine), as well as the transfer of galactose between GalCers and cholesterol in vitro, but with lower activity than with GlcCers. Contrary to GlcCer and GalCer, xylosylceramide/XylCer (such as beta-D-xyosyl-(1&lt;-&gt;1')-N-acylsphing-4-enine) is not a good substrate for hydrolysis, however it is a good xylose donor for transxylosylation activity to form cholesteryl 3-beta-D-xyloside. In Mus musculus (Mouse), this protein is Lysosomal acid glucosylceramidase (Gba1).